A 1642-amino-acid polypeptide reads, in one-letter code: Coiled-coil domain-containing protein 7A (1642 aa).

The disordered stretch occupies residues 21–51 (PYKKGLLNSSPKPKEKHNAKSKYGKNESMVL). The stretch at 161–184 (VNQMEEISKDQSNLEELQSDGKTA) is one LRR 1 repeat. Positions 279–330 (LEKALNDQQTIESKYKQLETDFQMLIMEKTLLEAEIRRLREIERVKSAAKEE) form a coiled coil. One copy of the LRR 2 repeat lies at 1310–1333 (IKELSKTLNLDGGDIELSDFVFKT).

In terms of tissue distribution, exclusively expressed in the testes.

This is Coiled-coil domain-containing protein 7A from Mus musculus (Mouse).